The chain runs to 404 residues: Phosphopentomutase (404 aa).

Residues Asp-10, Asp-303, His-308, Asp-344, His-345, and His-356 each coordinate Mn(2+).

Belongs to the phosphopentomutase family. Mn(2+) is required as a cofactor.

The protein localises to the cytoplasm. The enzyme catalyses 2-deoxy-alpha-D-ribose 1-phosphate = 2-deoxy-D-ribose 5-phosphate. It carries out the reaction alpha-D-ribose 1-phosphate = D-ribose 5-phosphate. The protein operates within carbohydrate degradation; 2-deoxy-D-ribose 1-phosphate degradation; D-glyceraldehyde 3-phosphate and acetaldehyde from 2-deoxy-alpha-D-ribose 1-phosphate: step 1/2. Its function is as follows. Isomerase that catalyzes the conversion of deoxy-ribose 1-phosphate (dRib-1-P) and ribose 1-phosphate (Rib-1-P) to deoxy-ribose 5-phosphate (dRib-5-P) and ribose 5-phosphate (Rib-5-P), respectively. The polypeptide is Phosphopentomutase (Shewanella sp. (strain W3-18-1)).